Reading from the N-terminus, the 1494-residue chain is B-cell CLL/lymphoma 9-like protein (1494 aa).

Disordered stretches follow at residues 1–236 and 269–496; these read MRIL…PPSQ and VPRA…DMGQ. Over residues 20-37 the composition is skewed to pro residues; sequence GSPPLSPRGHCPPAPAKP. 2 positions are modified to phosphoserine: S21 and S25. K36 bears the N6-acetyllysine mark. Polar residues-rich tracts occupy residues 45-70 and 85-96; these read TNHGKTGNGGAQSQHQNVNQGPTCNL and NQISPSNSSLKN. S88 carries the phosphoserine modification. K108 and K110 each carry N6-acetyllysine. Composition is skewed to basic and acidic residues over residues 114-126 and 134-153; these read ERSVSVDSGEQRE and SEAKEVAPRSKRRCVLERKQ. S116 and S118 each carry phosphoserine. K137 is modified (N6-acetyllysine). The span at 193 to 207 shows a compositional bias: polar residues; the sequence is PGQTAQLPLSESSAP. 2 stretches are compositionally biased toward pro residues: residues 279 to 289 and 299 to 322; these read KVPPTPEPLPL and SQPPPLPPPPPAPGSAPPALPPEG. The segment at 302–530 is necessary for interaction with CTNNB1; sequence PPLPPPPPAP…QEEYYEEKRR (229 aa). The span at 348-360 shows a compositional bias: low complexity; sequence THPNTPTAATANN. Positions 396–418 are enriched in basic and acidic residues; it reads LSKEQLEHRERSLQTLRDIERLL. S421 carries the phosphoserine modification. The residue at position 511 (T511) is a Phosphothreonine. An Asymmetric dimethylarginine modification is found at R677. 14 positions are modified to phosphoserine: S747, S810, S912, S923, S935, S939, S944, S972, S984, S988, S994, S1001, S1007, and S1014. Disordered stretches follow at residues 905–1082 and 1113–1206; these read RGLG…NPLS and ELLP…PGGP. The segment covering 932 to 957 has biased composition (polar residues); the sequence is PTLSQVHSPLVTSPSANLKSPQTPSQ. The span at 974–993 shows a compositional bias: polar residues; it reads QVLSSSLGVRSPTGSPSRLK. Residues 1016–1035 show a composition bias toward polar residues; the sequence is GVSQNKQPPLSINSSSTLGN. Low complexity predominate over residues 1046 to 1059; the sequence is PRNSSSAPPANPSS. The span at 1060–1082 shows a compositional bias: polar residues; that stretch reads GLMNPSLPFTSSPDPTPSQNPLS. Pro residues predominate over residues 1119-1129; the sequence is PLLPPPPPPQG. Over residues 1133–1143 the composition is skewed to polar residues; sequence GISNNQPNQMH. The segment covering 1165 to 1176 has biased composition (pro residues); sequence HEPPPTMLPSPT. Residue K1339 forms a Glycyl lysine isopeptide (Lys-Gly) (interchain with G-Cter in SUMO2) linkage.

This sequence belongs to the BCL9 family. As to quaternary structure, found in a complex with CDC73; CTNNB1 and PYGO1. Interacts with CTNNB1. In terms of tissue distribution, expressed in kidney, liver, lung, testis, brain, spleen, heart and skeletal muscle. Highly expressed in numerous colorectal tumors compared to corresponding non-cancerous tissues.

It is found in the nucleus. Its function is as follows. Transcriptional regulator that acts as an activator. Promotes beta-catenin transcriptional activity. Plays a role in tumorigenesis. Enhances the neoplastic transforming activity of CTNNB1. The chain is B-cell CLL/lymphoma 9-like protein (Bcl9l) from Mus musculus (Mouse).